Reading from the N-terminus, the 140-residue chain is UPF0134 protein MPN_094 (140 aa).

The protein belongs to the UPF0134 family.

This is UPF0134 protein MPN_094 from Mycoplasma pneumoniae (strain ATCC 29342 / M129 / Subtype 1) (Mycoplasmoides pneumoniae).